The primary structure comprises 285 residues: ATP phosphoribosyltransferase (285 aa).

Belongs to the ATP phosphoribosyltransferase family. Long subfamily. Mg(2+) is required as a cofactor.

It localises to the cytoplasm. The catalysed reaction is 1-(5-phospho-beta-D-ribosyl)-ATP + diphosphate = 5-phospho-alpha-D-ribose 1-diphosphate + ATP. The protein operates within amino-acid biosynthesis; L-histidine biosynthesis; L-histidine from 5-phospho-alpha-D-ribose 1-diphosphate: step 1/9. Its activity is regulated as follows. Feedback inhibited by histidine. In terms of biological role, catalyzes the condensation of ATP and 5-phosphoribose 1-diphosphate to form N'-(5'-phosphoribosyl)-ATP (PR-ATP). Has a crucial role in the pathway because the rate of histidine biosynthesis seems to be controlled primarily by regulation of HisG enzymatic activity. In Methanocella arvoryzae (strain DSM 22066 / NBRC 105507 / MRE50), this protein is ATP phosphoribosyltransferase.